The following is a 501-amino-acid chain: DDB1- and CUL4-associated factor 12-like protein 1 (501 aa).

A compositionally biased stretch (polar residues) spans 1 to 37 (MRQADSQTQPSPAEQETPQPAGPSNRSPPTMGPQQTG). The disordered stretch occupies residues 1–67 (MRQADSQTQP…PAAPMATAGE (67 aa)). WD repeat units follow at residues 185 to 225 (PPSC…PVCL), 230 to 268 (GHRDWIFAIAWMSDTVAVSGSRDGTVALWKVDPDMFNGS), 298 to 337 (PGNRKVRALAFSNKNQELGAVSLDGYFHLWKARSSLSRLL), and 384 to 423 (SREGGTGVRSLSVHQHIVTVGTGHGSLLFYDIRAQKFLEE).

It belongs to the WD repeat DCAF12 family.

This Mus musculus (Mouse) protein is DDB1- and CUL4-associated factor 12-like protein 1 (Dcaf12l1).